Consider the following 22-residue polypeptide: Defensin D1 (22 aa).

The protein belongs to the DEFL family. Group II subfamily.

In terms of biological role, antimicrobial peptide. Active against Gram-positive and Gram-negative bacterial pathogens. This is Defensin D1 from Spinacia oleracea (Spinach).